Here is a 303-residue protein sequence, read N- to C-terminus: tRNA pseudouridine synthase B (303 aa).

D46 acts as the Nucleophile in catalysis.

The protein belongs to the pseudouridine synthase TruB family. Type 1 subfamily.

The enzyme catalyses uridine(55) in tRNA = pseudouridine(55) in tRNA. Responsible for synthesis of pseudouridine from uracil-55 in the psi GC loop of transfer RNAs. This is tRNA pseudouridine synthase B from Hydrogenovibrio crunogenus (strain DSM 25203 / XCL-2) (Thiomicrospira crunogena).